A 704-amino-acid polypeptide reads, in one-letter code: Elongation factor G (704 aa).

The tr-type G domain occupies 8 to 290 (ARYRNIGISA…AVVDYLPSPV (283 aa)). Residues 17–24 (AHIDAGKT), 88–92 (DTPGH), and 142–145 (NKMD) each bind GTP.

The protein belongs to the TRAFAC class translation factor GTPase superfamily. Classic translation factor GTPase family. EF-G/EF-2 subfamily.

Its subcellular location is the cytoplasm. Functionally, catalyzes the GTP-dependent ribosomal translocation step during translation elongation. During this step, the ribosome changes from the pre-translocational (PRE) to the post-translocational (POST) state as the newly formed A-site-bound peptidyl-tRNA and P-site-bound deacylated tRNA move to the P and E sites, respectively. Catalyzes the coordinated movement of the two tRNA molecules, the mRNA and conformational changes in the ribosome. The chain is Elongation factor G from Pectobacterium carotovorum subsp. carotovorum (strain PC1).